The chain runs to 610 residues: Elongation factor 4 (610 aa).

One can recognise a tr-type G domain in the interval 13–195 (SHIRNFSIVA…AIVNRLPAPK (183 aa)). GTP is bound by residues 25 to 30 (DHGKST) and 142 to 145 (NKID).

This sequence belongs to the TRAFAC class translation factor GTPase superfamily. Classic translation factor GTPase family. LepA subfamily.

The protein resides in the cell inner membrane. The enzyme catalyses GTP + H2O = GDP + phosphate + H(+). Its function is as follows. Required for accurate and efficient protein synthesis under certain stress conditions. May act as a fidelity factor of the translation reaction, by catalyzing a one-codon backward translocation of tRNAs on improperly translocated ribosomes. Back-translocation proceeds from a post-translocation (POST) complex to a pre-translocation (PRE) complex, thus giving elongation factor G a second chance to translocate the tRNAs correctly. Binds to ribosomes in a GTP-dependent manner. The chain is Elongation factor 4 from Rhizobium leguminosarum bv. trifolii (strain WSM2304).